Consider the following 590-residue polypeptide: Putative histone-lysine N-methyltransferase PRDM6 (590 aa).

The tract at residues 25–87 is disordered; that stretch reads QLFPHGGGGP…STPASSSTSA (63 aa). The segment covering 29-42 has biased composition (gly residues); the sequence is HGGGGPLKGGGAAG. A compositionally biased stretch (low complexity) spans 71–87; it reads ASLSSASSTPASSSTSA. The region spanning 241–360 is the SET domain; sequence REVCLCTSTV…RGTELLVWYN (120 aa). The C2H2-type 1; degenerate zinc finger occupies 468-490; that stretch reads WKCGQCFKTFTQRILLQMHVCTQ. 2 consecutive C2H2-type zinc fingers follow at residues 496 to 518 and 524 to 546; these read YQCG…VVTH and FKCG…IRTH. The C2H2-type 4; degenerate zinc finger occupies 552 to 574; that stretch reads FKCERCERSFTQATQLSRHQRMP.

This sequence belongs to the class V-like SAM-binding methyltransferase superfamily. In terms of assembly, interacts with HDAC1, HDAC2, HDAC3, CBX1 and EP300.

The protein resides in the nucleus. The catalysed reaction is L-lysyl(20)-[histone H4] + S-adenosyl-L-methionine = N(6)-methyl-L-lysyl(20)-[histone H4] + S-adenosyl-L-homocysteine + H(+). Putative histone methyltransferase that acts as a transcriptional repressor of smooth muscle gene expression. Promotes the transition from differentiated to proliferative smooth muscle by suppressing differentiation and maintaining the proliferative potential of vascular smooth muscle cells. Also plays a role in endothelial cells by inhibiting endothelial cell proliferation, survival and differentiation. It is unclear whether it has histone methyltransferase activity in vivo. According to some authors, it does not act as a histone methyltransferase by itself and represses transcription by recruiting EHMT2/G9a. According to others, it possesses histone methyltransferase activity when associated with other proteins and specifically methylates 'Lys-20' of histone H4 in vitro. 'Lys-20' methylation represents a specific tag for epigenetic transcriptional repression. This Bos taurus (Bovine) protein is Putative histone-lysine N-methyltransferase PRDM6 (PRDM6).